Here is a 466-residue protein sequence, read N- to C-terminus: Ribulose bisphosphate carboxylase large chain (466 aa).

At lysine 5 the chain carries N6,N6,N6-trimethyllysine. 2 residues coordinate substrate: asparagine 114 and threonine 164. The Proton acceptor role is filled by lysine 166. Residue lysine 168 participates in substrate binding. 3 residues coordinate Mg(2+): lysine 192, aspartate 194, and glutamate 195. Lysine 192 bears the N6-carboxylysine mark. The active-site Proton acceptor is histidine 285. Arginine 286, histidine 318, and serine 370 together coordinate substrate.

The protein belongs to the RuBisCO large chain family. Type I subfamily. In terms of assembly, heterohexadecamer of 8 large chains and 8 small chains. Requires Mg(2+) as cofactor.

It is found in the plastid. Its subcellular location is the chloroplast. The enzyme catalyses 2 (2R)-3-phosphoglycerate + 2 H(+) = D-ribulose 1,5-bisphosphate + CO2 + H2O. The catalysed reaction is D-ribulose 1,5-bisphosphate + O2 = 2-phosphoglycolate + (2R)-3-phosphoglycerate + 2 H(+). Functionally, ruBisCO catalyzes two reactions: the carboxylation of D-ribulose 1,5-bisphosphate, the primary event in carbon dioxide fixation, as well as the oxidative fragmentation of the pentose substrate in the photorespiration process. Both reactions occur simultaneously and in competition at the same active site. The sequence is that of Ribulose bisphosphate carboxylase large chain from Lobelia sp.